We begin with the raw amino-acid sequence, 395 residues long: ATP phosphoribosyltransferase regulatory subunit (395 aa).

Belongs to the class-II aminoacyl-tRNA synthetase family. HisZ subfamily. As to quaternary structure, heteromultimer composed of HisG and HisZ subunits.

It is found in the cytoplasm. It functions in the pathway amino-acid biosynthesis; L-histidine biosynthesis; L-histidine from 5-phospho-alpha-D-ribose 1-diphosphate: step 1/9. Required for the first step of histidine biosynthesis. May allow the feedback regulation of ATP phosphoribosyltransferase activity by histidine. The polypeptide is ATP phosphoribosyltransferase regulatory subunit (Thioalkalivibrio sulfidiphilus (strain HL-EbGR7)).